The chain runs to 174 residues: Acetolactate synthase small subunit (174 aa).

Positions 4 to 78 (TLSVLVQDEA…NILNVQDVTN (75 aa)) constitute an ACT domain.

The protein belongs to the acetolactate synthase small subunit family. As to quaternary structure, dimer of large and small chains.

It localises to the plastid. The protein resides in the chloroplast. The catalysed reaction is 2 pyruvate + H(+) = (2S)-2-acetolactate + CO2. It functions in the pathway amino-acid biosynthesis; L-isoleucine biosynthesis; L-isoleucine from 2-oxobutanoate: step 1/4. Its pathway is amino-acid biosynthesis; L-valine biosynthesis; L-valine from pyruvate: step 1/4. The chain is Acetolactate synthase small subunit (ilvH) from Porphyra purpurea (Red seaweed).